A 311-amino-acid polypeptide reads, in one-letter code: N-acetylmuramic acid 6-phosphate etherase (311 aa).

The 164-residue stretch at 66 to 229 (VAVRMARGGR…STITMIRLGK (164 aa)) folds into the SIS domain. Residue E94 is the Proton donor of the active site. E125 is an active-site residue.

This sequence belongs to the GCKR-like family. MurNAc-6-P etherase subfamily. Homodimer.

It carries out the reaction N-acetyl-D-muramate 6-phosphate + H2O = N-acetyl-D-glucosamine 6-phosphate + (R)-lactate. It functions in the pathway amino-sugar metabolism; N-acetylmuramate degradation. Functionally, specifically catalyzes the cleavage of the D-lactyl ether substituent of MurNAc 6-phosphate, producing GlcNAc 6-phosphate and D-lactate. The protein is N-acetylmuramic acid 6-phosphate etherase of Streptomyces coelicolor (strain ATCC BAA-471 / A3(2) / M145).